The primary structure comprises 87 residues: Small ribosomal subunit protein bS20 (87 aa).

This sequence belongs to the bacterial ribosomal protein bS20 family.

Its function is as follows. Binds directly to 16S ribosomal RNA. The protein is Small ribosomal subunit protein bS20 of Clostridium botulinum (strain Eklund 17B / Type B).